Reading from the N-terminus, the 380-residue chain is 5-amino-6-(D-ribitylamino)uracil--L-tyrosine 4-hydroxyphenyl transferase (380 aa).

Residues 56–303 (VTYIINRNIN…GAVARIYLGN (248 aa)) form the Radical SAM core domain. Residues cysteine 70, cysteine 74, and cysteine 77 each coordinate [4Fe-4S] cluster.

Belongs to the radical SAM superfamily. CofH family. Consists of two subunits, CofG and CofH. Requires [4Fe-4S] cluster as cofactor.

It catalyses the reaction 5-amino-6-(D-ribitylamino)uracil + L-tyrosine + S-adenosyl-L-methionine = 5-amino-5-(4-hydroxybenzyl)-6-(D-ribitylimino)-5,6-dihydrouracil + 2-iminoacetate + 5'-deoxyadenosine + L-methionine + H(+). Its pathway is cofactor biosynthesis; coenzyme F0 biosynthesis. Catalyzes the radical-mediated synthesis of 5-amino-5-(4-hydroxybenzyl)-6-(D-ribitylimino)-5,6-dihydrouracil from 5-amino-6-(D-ribitylamino)uracil and L-tyrosine. This Nostoc punctiforme (strain ATCC 29133 / PCC 73102) protein is 5-amino-6-(D-ribitylamino)uracil--L-tyrosine 4-hydroxyphenyl transferase.